We begin with the raw amino-acid sequence, 274 residues long: Cytochrome b-c1 complex subunit Rieske, mitochondrial (274 aa).

Residues 79–103 (SHTDIKVPDFSEYRRLEVLDSTKSS) are Mitochondrial matrix-facing. Residues 104–140 (RESSEARKGFSYLVTGVTTVGVAYAAKNAVTQFVSSM) traverse the membrane as a helical segment. Residues 141 to 274 (SASADVLALA…FTSDDMVIVG (134 aa)) are Mitochondrial intermembrane-facing. The Rieske domain occupies 187-272 (EAAVELSQLR…YEFTSDDMVI (86 aa)). Positions 217, 219, 236, 239, and 241 each coordinate [2Fe-2S] cluster. A disulfide bridge connects residues Cys222 and Cys238.

Belongs to the Rieske iron-sulfur protein family. Component of the ubiquinol-cytochrome c oxidoreductase (cytochrome b-c1 complex, complex III, CIII), a multisubunit enzyme composed of 11 subunits. The complex is composed of 3 respiratory subunits cytochrome b, cytochrome c1 and Rieske protein UQCRFS1, 2 core protein subunits UQCRC1/QCR1 and UQCRC2/QCR2, and 6 low-molecular weight protein subunits UQCRH/QCR6, UQCRB/QCR7, UQCRQ/QCR8, UQCR10/QCR9, UQCR11/QCR10 and subunit 9, the cleavage product of Rieske protein UQCRFS1. The complex exists as an obligatory dimer and forms supercomplexes (SCs) in the inner mitochondrial membrane with NADH-ubiquinone oxidoreductase (complex I, CI) and cytochrome c oxidase (complex IV, CIV), resulting in different assemblies (supercomplex SCI(1)III(2)IV(1) and megacomplex MCI(2)III(2)IV(2)). Incorporation of the Rieske protein UQCRFS1 is the penultimate step in complex III assembly. Interacts with TTC19, which is involved in the clearance of UQCRFS1 fragments. As to quaternary structure, component of the ubiquinol-cytochrome c oxidoreductase (cytochrome b-c1 complex, complex III, CIII). Subunit 9 corresponds to the mitochondrial targeting sequence (MTS) of Rieske protein UQCRFS1. It is retained after processing and incorporated inside complex III, where it remains bound to the complex and localizes between the 2 core subunits UQCRC1/QCR1 and UQCRC2/QCR2. The cofactor is [2Fe-2S] cluster. Post-translationally, proteolytic processing is necessary for the correct insertion of UQCRFS1 in the complex III dimer. Several fragments are generated during UQCRFS1 insertion, most probably due to the endogenous matrix-processing peptidase (MPP) activity of the 2 core protein subunits UQCRC1/QCR1 and UQCRC2/QCR2, which are homologous to the 2 mitochondrial-processing peptidase (MPP) subunits beta-MPP and alpha-MPP respectively. The action of the protease is also necessary for the clearance of the UQCRFS1 fragments.

The protein localises to the mitochondrion inner membrane. It catalyses the reaction a quinol + 2 Fe(III)-[cytochrome c](out) = a quinone + 2 Fe(II)-[cytochrome c](out) + 2 H(+)(out). Functionally, component of the ubiquinol-cytochrome c oxidoreductase, a multisubunit transmembrane complex that is part of the mitochondrial electron transport chain which drives oxidative phosphorylation. The respiratory chain contains 3 multisubunit complexes succinate dehydrogenase (complex II, CII), ubiquinol-cytochrome c oxidoreductase (cytochrome b-c1 complex, complex III, CIII) and cytochrome c oxidase (complex IV, CIV), that cooperate to transfer electrons derived from NADH and succinate to molecular oxygen, creating an electrochemical gradient over the inner membrane that drives transmembrane transport and the ATP synthase. The cytochrome b-c1 complex catalyzes electron transfer from ubiquinol to cytochrome c, linking this redox reaction to translocation of protons across the mitochondrial inner membrane, with protons being carried across the membrane as hydrogens on the quinol. In the process called Q cycle, 2 protons are consumed from the matrix, 4 protons are released into the intermembrane space and 2 electrons are passed to cytochrome c. The Rieske protein is a catalytic core subunit containing a [2Fe-2S] iron-sulfur cluster. It cycles between 2 conformational states during catalysis to transfer electrons from the quinol bound in the Q(0) site in cytochrome b to cytochrome c1. Incorporation of UQCRFS1 is the penultimate step in complex III assembly. Component of the ubiquinol-cytochrome c oxidoreductase (cytochrome b-c1 complex, complex III, CIII). UQCRFS1 undergoes proteolytic processing once it is incorporated in the complex III dimer. One of the fragments, called subunit 9, corresponds to its mitochondrial targeting sequence (MTS). The proteolytic processing is necessary for the correct insertion of UQCRFS1 in the complex III dimer, but the persistence of UQCRFS1-derived fragments may prevent newly imported UQCRFS1 to be processed and assembled into complex III and is detrimental for the complex III structure and function. This Gorilla gorilla gorilla (Western lowland gorilla) protein is Cytochrome b-c1 complex subunit Rieske, mitochondrial (UQCRFS1).